A 169-amino-acid polypeptide reads, in one-letter code: Regulator of G-protein signaling rgs-2 (169 aa).

The 120-residue stretch at 39-158 (GWSQSFENLM…FLASNIYKTV (120 aa)) folds into the RGS domain.

In terms of processing, may be phosphorylated and activated by egl-4. Expressed in a subset of neurons including ventral cord and head- and tail-ganglia neurons. Also expressed in non-neuronal cells including pharyngeal and uterine muscles.

Weakly inhibits G protein signaling in nervous system, interacting preferentially with the G(O) subfamily member goa-1. In vitro, it acts as a GTPase activator of goa-1. Rgs-1 and rgs-2 redundantly adjust signaling when worms are fed to allow rapid induction of egg-laying behavior. Modulates chemotaxis responses by regulating negatively the sensitivity to quinine in ASH sensory neurons. In Caenorhabditis elegans, this protein is Regulator of G-protein signaling rgs-2 (rgs-2).